A 366-amino-acid polypeptide reads, in one-letter code: Ribonuclease P protein subunit drpp30 (366 aa).

The disordered stretch occupies residues 265–366; it reads EDTQPTNNNI…DIDNNKRKRE (102 aa). Residues 275 to 290 are compositionally biased toward basic and acidic residues; sequence PHEKHINKESTGKETI. Low complexity-rich tracts occupy residues 291-324 and 333-351; these read PKPTTTTTTTTTTTTTAKTKTPTPTPTTEKTPSI and TAKSNKKTTTNTTSTAQKQ. Over residues 352-366 the composition is skewed to basic and acidic residues; it reads GKMDIDIDNNKRKRE.

It belongs to the eukaryotic/archaeal RNase P protein component 3 family.

It is found in the nucleus. The enzyme catalyses Endonucleolytic cleavage of RNA, removing 5'-extranucleotides from tRNA precursor.. Functionally, component of ribonuclease P, a protein complex that generates mature tRNA molecules by cleaving their 5'-ends. This Dictyostelium discoideum (Social amoeba) protein is Ribonuclease P protein subunit drpp30 (drpp30).